The chain runs to 473 residues: Cell division protein FtsP (473 aa).

Positions 1–27 form a signal peptide, tat-type signal; sequence MSFSRRQFIQVSGLAMCIGAAPLLVRA.

It belongs to the FtsP family. Predicted to be exported by the Tat system. The position of the signal peptide cleavage has not been experimentally proven.

The protein localises to the periplasm. Its function is as follows. Cell division protein that is required for growth during stress conditions. May be involved in protecting or stabilizing the divisomal assembly under conditions of stress. The protein is Cell division protein FtsP of Photorhabdus laumondii subsp. laumondii (strain DSM 15139 / CIP 105565 / TT01) (Photorhabdus luminescens subsp. laumondii).